A 231-amino-acid chain; its full sequence is Adenosylcobinamide-GDP ribazoletransferase (231 aa).

The next 6 helical transmembrane spans lie at 24–44 (LWAF…ILYL), 46–66 (LPLS…LLHL), 96–116 (IAGL…LQLL), 159–176 (LALG…VVLF), 181–198 (LAGI…RISL), and 209–229 (LGAT…LVWW).

It belongs to the CobS family. Mg(2+) is required as a cofactor.

Its subcellular location is the cell membrane. The catalysed reaction is alpha-ribazole + adenosylcob(III)inamide-GDP = adenosylcob(III)alamin + GMP + H(+). The enzyme catalyses alpha-ribazole 5'-phosphate + adenosylcob(III)inamide-GDP = adenosylcob(III)alamin 5'-phosphate + GMP + H(+). It participates in cofactor biosynthesis; adenosylcobalamin biosynthesis; adenosylcobalamin from cob(II)yrinate a,c-diamide: step 7/7. In terms of biological role, joins adenosylcobinamide-GDP and alpha-ribazole to generate adenosylcobalamin (Ado-cobalamin). Also synthesizes adenosylcobalamin 5'-phosphate from adenosylcobinamide-GDP and alpha-ribazole 5'-phosphate. The chain is Adenosylcobinamide-GDP ribazoletransferase from Thermococcus kodakarensis (strain ATCC BAA-918 / JCM 12380 / KOD1) (Pyrococcus kodakaraensis (strain KOD1)).